The chain runs to 191 residues: Calcium-activated potassium channel subunit beta-1 (191 aa).

The Cytoplasmic segment spans residues M1–C18. Residues L19 to L39 traverse the membrane as a helical segment. Residues P40 to Q155 lie on the Extracellular side of the membrane. N80 and N142 each carry an N-linked (GlcNAc...) asparagine glycan. The chain crosses the membrane as a helical span at residues V156–A176. Topologically, residues M177 to K191 are cytoplasmic.

Belongs to the KCNMB (TC 8.A.14.1) family. KCNMB1 subfamily. In terms of assembly, interacts with KCNMA1 tetramer. There are probably 4 molecules of KCMNB1 per KCNMA1 tetramer. In terms of processing, N-glycosylated. Expressed in many tissues containing smooth muscles. In brain and heart, it is not expressed except in the vasculature, such as cerebral arteries, aorta and corona arteries.

The protein resides in the membrane. Functionally, regulatory subunit of the calcium activated potassium KCNMA1 (maxiK) channel. Modulates the calcium sensitivity and gating kinetics of KCNMA1, thereby contributing to KCNMA1 channel diversity. Increases the apparent Ca(2+)/voltage sensitivity of the KCNMA1 channel. It also modifies KCNMA1 channel kinetics and alters its pharmacological properties. It slows down the activation and the deactivation kinetics of the channel. Acts as a negative regulator of smooth muscle contraction by enhancing the calcium sensitivity to KCNMA1. Its presence is also a requirement for internal binding of the KCNMA1 channel opener dehydrosoyasaponin I (DHS-1) triterpene glycoside and for external binding of the agonist hormone 17-beta-estradiol (E2). Increases the binding activity of charybdotoxin (CTX) toxin to KCNMA1 peptide blocker by increasing the CTX association rate and decreasing the dissociation rate. The sequence is that of Calcium-activated potassium channel subunit beta-1 (Kcnmb1) from Mus musculus (Mouse).